The primary structure comprises 392 residues: MQRITILGATGSIGESTLDVVRRHPDRYSVHALSAHRQVDKLAAACVEFRPARAVVGSAEAARELEAKLRAAGVPTEVSYGETALESIAEDAGTDAVMAAIVGAAGLRSSLAAARAGKRVLLANKESLVMSGGIFMDAVREHGATLLPIDSEHNAIFQCLPTSDPRYGAGVSKVLLTASGGPFRTRDPSTLHDITPDQACAHPKWVMGRKISVDSATMMNKGLEVIEAHWLFGAPAEKIEVLIHPQSIVHSMVAYADGSVLAQLGNPDMRTPIAYGMAYPERIDSGVTPLDLTVAGGLHFETPDLERFPCLGLAFDALRAGGVAPAVLNAANEVAVEAFLNGKIRFTDIARVVATVLEQPADGSADTLEGVLAADSAARRGAQAQLGSLAGR.

Thr10, Gly11, Ser12, Ile13, Arg37, Gln38, and Asn124 together coordinate NADPH. Residue Lys125 participates in 1-deoxy-D-xylulose 5-phosphate binding. Glu126 lines the NADPH pocket. Asp150 is a binding site for Mn(2+). Ser151, Glu152, Ser179, and His202 together coordinate 1-deoxy-D-xylulose 5-phosphate. Glu152 is a Mn(2+) binding site. Position 208 (Gly208) interacts with NADPH. 1-deoxy-D-xylulose 5-phosphate is bound by residues Ser215, Asn220, Lys221, and Glu224. Glu224 serves as a coordination point for Mn(2+).

It belongs to the DXR family. Mg(2+) serves as cofactor. Mn(2+) is required as a cofactor.

The enzyme catalyses 2-C-methyl-D-erythritol 4-phosphate + NADP(+) = 1-deoxy-D-xylulose 5-phosphate + NADPH + H(+). It participates in isoprenoid biosynthesis; isopentenyl diphosphate biosynthesis via DXP pathway; isopentenyl diphosphate from 1-deoxy-D-xylulose 5-phosphate: step 1/6. Its function is as follows. Catalyzes the NADPH-dependent rearrangement and reduction of 1-deoxy-D-xylulose-5-phosphate (DXP) to 2-C-methyl-D-erythritol 4-phosphate (MEP). The sequence is that of 1-deoxy-D-xylulose 5-phosphate reductoisomerase from Cupriavidus metallidurans (strain ATCC 43123 / DSM 2839 / NBRC 102507 / CH34) (Ralstonia metallidurans).